Reading from the N-terminus, the 75-residue chain is Probable protein BRICK1-A (75 aa).

The stretch at 41 to 72 (MSCRSRLATLNEKLTALERRIEYIEARVTKGE) forms a coiled coil.

The protein belongs to the BRK1 family.

The protein localises to the cytoplasm. It is found in the cytoskeleton. Involved in regulation of actin and microtubule organization. Part of a WAVE complex that activates the Arp2/3 complex. The protein is Probable protein BRICK1-A (brk1-a) of Xenopus laevis (African clawed frog).